A 327-amino-acid chain; its full sequence is Tartrate-resistant acid phosphatase type 5 (327 aa).

Positions 1-22 are cleaved as a signal peptide; it reads MDSWVVLLGLQIIWLPLLTHGT. Fe cation-binding residues include Asp-35, Asp-73, Tyr-76, and Asn-112. Asn-118 and Asn-149 each carry an N-linked (GlcNAc...) asparagine glycan. Cys-163 and Cys-221 form a disulfide bridge. His-207, His-242, and His-244 together coordinate Fe cation.

As to quaternary structure, exists either as monomer or, after proteolytic processing, as a dimer of two chains linked by disulfide bond(s). Fe cation is required as a cofactor. In terms of tissue distribution, characteristic constituent of osteoclasts.

The protein localises to the lysosome. It carries out the reaction a phosphate monoester + H2O = an alcohol + phosphate. Its function is as follows. May play a role in the process of bone resorption. The osteoclastic trap acts on nucleotide tri- and diphosphates with higher affinity, compared with other substrates. The protein is Tartrate-resistant acid phosphatase type 5 (Acp5) of Mus musculus (Mouse).